The following is a 260-amino-acid chain: Diphthine synthase (260 aa).

Residues L9, D85, I88, 113-114, L168, A202, and H227 each bind S-adenosyl-L-methionine; that span reads TA.

The protein belongs to the diphthine synthase family. In terms of assembly, homodimer.

The enzyme catalyses 2-[(3S)-amino-3-carboxypropyl]-L-histidyl-[translation elongation factor 2] + 3 S-adenosyl-L-methionine = diphthine-[translation elongation factor 2] + 3 S-adenosyl-L-homocysteine + 3 H(+). Its pathway is protein modification; peptidyl-diphthamide biosynthesis. Its function is as follows. S-adenosyl-L-methionine-dependent methyltransferase that catalyzes the trimethylation of the amino group of the modified target histidine residue in translation elongation factor 2 (EF-2), to form an intermediate called diphthine. The three successive methylation reactions represent the second step of diphthamide biosynthesis. The sequence is that of Diphthine synthase from Haloquadratum walsbyi (strain DSM 16790 / HBSQ001).